Consider the following 116-residue polypeptide: MKTIIVFLSLLVLATKFGDAKEGVNQKQKKEVTQNEFREEYLNEMAAMSLVQQLEAIERALFENEAGRNSRQKRCNGENVPCGPNHSTCCSGLSCEETFGYGWWYASPYCVKPSKG.

The first 20 residues, 1–20 (MKTIIVFLSLLVLATKFGDA), serve as a signal peptide directing secretion. A propeptide spanning residues 21-74 (KEGVNQKQKKEVTQNEFREEYLNEMAAMSLVQQLEAIERALFENEAGRNSRQKR) is cleaved from the precursor. Intrachain disulfides connect Cys-75-Cys-90, Cys-82-Cys-95, and Cys-89-Cys-110.

Belongs to the neurotoxin 14 (magi-1) family. 06 (ICK-Trit) subfamily. As to expression, expressed by the venom gland.

It is found in the secreted. Ion channel inhibitor. The chain is U16-barytoxin-Tl1b from Trittame loki (Brush-footed trapdoor spider).